Reading from the N-terminus, the 272-residue chain is Type II secretion system protein C (272 aa).

Over 1–16 (MNISKLPPLSPSVIRR) the chain is Cytoplasmic. A helical membrane pass occupies residues 17–35 (ILFYLLMLLFCQQLAMIFW). Topologically, residues 36 to 272 (RVGLPDNSPV…DIYMEFGGDE (237 aa)) are periplasmic.

It belongs to the GSP C family.

The protein resides in the cell inner membrane. Its function is as follows. Involved in a type II secretion system (T2SS, formerly general secretion pathway, GSP) for the export of proteins. Required for the translocation of the multiple pectic enzymes. This Dickeya chrysanthemi (Pectobacterium chrysanthemi) protein is Type II secretion system protein C (outC).